The following is a 1255-amino-acid chain: Cilia- and flagella-associated protein 337 B (1255 aa).

Residues 87–122 form the EF-hand domain; that stretch reads KLVRCLTNLFEEIDLNGNGILEWDEFTNYVIEKATV. Residues D100, N102, N104, and E111 each contribute to the Ca(2+) site. 12 WD repeats span residues 228-269, 282-322, 326-365, 368-407, 410-449, 496-536, 538-577, 580-624, 625-664, 669-708, 769-808, and 844-883; these read DLKT…WVLA, EFKN…KELE, AHTE…KKRV, EHTR…LIYK, GHSS…NVQC, VDDY…KIFS, VTQG…MIKA, KHSA…RTLE, LKDV…QNGS, TQYE…FKFQ, QQNL…TILE, and AHYE…LIDQ. Disordered stretches follow at residues 941–988 and 1140–1160; these read IKSL…NFNP and QQQV…QQPG. A compositionally biased stretch (low complexity) spans 953 to 969; the sequence is TQESSTQEQEAAQQPQQ. Over residues 1148–1160 the composition is skewed to polar residues; sequence TEPSSNRSHQQPG.

It belongs to the CFAP337 family. In terms of assembly, associates with components of the nexin-dynein regulatory complex (N-DRC) and the CFAP184:CFAP263 complex.

It is found in the cell projection. The protein resides in the cilium. Functionally, associates with components of the nexin-dynein regulatory complex (N-DRC), a key regulator of ciliary/flagellar motility, and might act as an inner dynein arm (IDA) hub or linkage. This chain is Cilia- and flagella-associated protein 337 B, found in Tetrahymena thermophila (strain SB210).